A 197-amino-acid polypeptide reads, in one-letter code: MADSMQLAGIVLAGGESRRMGRDKATLPGPRGAATLLEYVVGVLTQRCDPIFVMAAPGQPLPEVSARIIRDEIRGQGPLPATGRGLRAAAEAGARYAFVCAVDMPLLSPELIDDLVHLATETNAEVVLPWDGRSHYLASLYRTDLAERIDRLVAGGARSMRALIDASDAQQIVLPESRFLANVNTEADLRALAQARA.

GTP-binding positions include 12 to 14, Lys24, Asp71, and Asp103; that span reads LAG. Residue Asp103 participates in Mg(2+) binding.

Belongs to the MobA family. The cofactor is Mg(2+).

It localises to the cytoplasm. It carries out the reaction Mo-molybdopterin + GTP + H(+) = Mo-molybdopterin guanine dinucleotide + diphosphate. Functionally, transfers a GMP moiety from GTP to Mo-molybdopterin (Mo-MPT) cofactor (Moco or molybdenum cofactor) to form Mo-molybdopterin guanine dinucleotide (Mo-MGD) cofactor. This is Probable molybdenum cofactor guanylyltransferase from Mycobacterium avium (strain 104).